We begin with the raw amino-acid sequence, 475 residues long: ATP synthase subunit beta (475 aa).

Position 153 to 160 (153 to 160) interacts with ATP; that stretch reads GGAGVGKT.

It belongs to the ATPase alpha/beta chains family. F-type ATPases have 2 components, CF(1) - the catalytic core - and CF(0) - the membrane proton channel. CF(1) has five subunits: alpha(3), beta(3), gamma(1), delta(1), epsilon(1). CF(0) has three main subunits: a(1), b(2) and c(9-12). The alpha and beta chains form an alternating ring which encloses part of the gamma chain. CF(1) is attached to CF(0) by a central stalk formed by the gamma and epsilon chains, while a peripheral stalk is formed by the delta and b chains.

It is found in the cell membrane. The catalysed reaction is ATP + H2O + 4 H(+)(in) = ADP + phosphate + 5 H(+)(out). Produces ATP from ADP in the presence of a proton gradient across the membrane. The catalytic sites are hosted primarily by the beta subunits. The sequence is that of ATP synthase subunit beta from Limosilactobacillus reuteri (strain DSM 20016) (Lactobacillus reuteri).